Consider the following 247-residue polypeptide: NAD-dependent protein deacetylase (247 aa).

Residues 1 to 244 (MIYEKVAEEL…PKILENVRQK (244 aa)) enclose the Deacetylase sirtuin-type domain. NAD(+)-binding residues include Ala-22, Thr-26, Phe-33, Arg-34, Gln-98, Ile-100, Asp-101, and His-116. Phe-33 contacts nicotinamide. Residues Ile-100 and Asp-101 each contribute to the nicotinamide site. Residue His-116 is the Proton acceptor of the active site. Zn(2+) is bound by residues Cys-124, Cys-127, Cys-149, and Cys-151. The NAD(+) site is built by Ser-187, Ser-188, Asn-212, and Val-230.

The protein belongs to the sirtuin family. Class U subfamily. In terms of assembly, monomer. It depends on Zn(2+) as a cofactor.

Its subcellular location is the cytoplasm. It catalyses the reaction N(6)-acetyl-L-lysyl-[protein] + NAD(+) + H2O = 2''-O-acetyl-ADP-D-ribose + nicotinamide + L-lysyl-[protein]. In terms of biological role, NAD-dependent protein deacetylase which modulates the activities of several enzymes which are inactive in their acetylated form. Deacetylates the N-terminal lysine residue of albA1, the major archaeal DNA compaction protein and that, in turn, increases albA1's DNA binding affinity, thereby repressing transcription. The polypeptide is NAD-dependent protein deacetylase (Saccharolobus solfataricus (strain ATCC 35092 / DSM 1617 / JCM 11322 / P2) (Sulfolobus solfataricus)).